Consider the following 265-residue polypeptide: DNA-binding dual transcriptional regulator Rns (265 aa).

Residues histidine 20 and arginine 75 each contribute to the decanoate site. Residues 164 to 261 enclose the HTH araC/xylS-type domain; that stretch reads DKVRNLIEKD…GVTPKQFFTY (98 aa). DNA-binding regions (H-T-H motif) lie at residues 181–202 and 228–251; these read GIIADAFNASEITIRKRLESEN and ISQISNMIGISSASYFIRIFNKHY.

Homodimer; each subunit binds one decanoate molecule.

It is found in the cytoplasm. Its activity is regulated as follows. Rns-dependent expression of pilins and outer membrane proteins CexE-alpha and CexE-epsilon are inhibited in vivo by decanoic acid (decanoate); has no effect on expression of DnaK or flagellins. Decanoate relieves Rns-dependent repression of nlpA. In terms of biological role, a transcription factor required for the expression of the CS1 and CS2 adhesins of enterotoxigenic E.coli. Required for expression of pilins and some outer membrane lipoproteins. Represses expression of nlpA. The protein is DNA-binding dual transcriptional regulator Rns of Escherichia coli.